The following is a 157-amino-acid chain: Lipoprotein signal peptidase (157 aa).

4 consecutive transmembrane segments (helical) span residues 10-30, 36-56, 58-78, and 84-104; these read LVFIGVFFLIFGVDQAIKHAI, YESLMIDIVLVFNKGVAFSLL, FLEGGLKYLQILLILGLFIFL, and LFKNHAIEFGMVFGAGVSNVL. Residues D114 and D131 contribute to the active site. The chain crosses the membrane as a helical span at residues 122 to 142; the sequence is FDFAIFNFADVMIDVGVGVLL.

The protein belongs to the peptidase A8 family.

It is found in the cell inner membrane. It carries out the reaction Release of signal peptides from bacterial membrane prolipoproteins. Hydrolyzes -Xaa-Yaa-Zaa-|-(S,diacylglyceryl)Cys-, in which Xaa is hydrophobic (preferably Leu), and Yaa (Ala or Ser) and Zaa (Gly or Ala) have small, neutral side chains.. It functions in the pathway protein modification; lipoprotein biosynthesis (signal peptide cleavage). Its function is as follows. This protein specifically catalyzes the removal of signal peptides from prolipoproteins. The sequence is that of Lipoprotein signal peptidase from Helicobacter pylori (strain P12).